A 372-amino-acid polypeptide reads, in one-letter code: L-selectin (372 aa).

Residues 1-28 (MIFPWKCQSTQRDLWNIFKLWGWTMLCC) form the signal peptide. A propeptide spanning residues 29 to 38 (DFLAHHGTDC) is cleaved from the precursor. Residues 39-332 (WTYHYSEKPM…FSMIKEGDYN (294 aa)) lie on the Extracellular side of the membrane. A C-type lectin domain is found at 55-155 (RFCRDNYTDL…ACHKLKAALC (101 aa)). Intrachain disulfides connect Cys57/Cys155, Cys128/Cys147, Cys160/Cys171, Cys165/Cys180, Cys182/Cys191, Cys197/Cys241, Cys227/Cys254, Cys259/Cys303, and Cys289/Cys316. Asn60 and Asn104 each carry an N-linked (GlcNAc...) asparagine glycan. The Ca(2+) site is built by Glu118, Asn120, Glu126, Asn143, and Asp144. Residues 156 to 192 (YTASCQPWSCSGHGECVEIINNYTCNCDVGYYGPQCQ) enclose the EGF-like domain. N-linked (GlcNAc...) asparagine glycosylation is present at Asn177. Sushi domains are found at residues 195-256 (IQCE…TCQV) and 257-318 (IQCE…ICQK). 3 N-linked (GlcNAc...) asparagine glycosylation sites follow: Asn232, Asn246, and Asn271. The helical transmembrane segment at 333-355 (PLFIPVAVMVTAFSGLAFIIWLA) threads the bilayer. Topologically, residues 356 to 372 (RRLKKGKKSKRSMNDPY) are cytoplasmic.

This sequence belongs to the selectin/LECAM family. As to quaternary structure, interaction with SELPLG/PSGL1 and PODXL2 is required for promoting recruitment and rolling of leukocytes. This interaction is dependent on the sialyl Lewis X glycan modification of SELPLG and PODXL2, and tyrosine sulfation modifications of SELPLG. Sulfation on 'Tyr-51' of SELPLG is important for L-selectin binding. N-glycosylated. In terms of tissue distribution, expressed in B-cell lines and T-lymphocytes.

It localises to the cell membrane. Its function is as follows. Calcium-dependent lectin that mediates cell adhesion by binding to glycoproteins on neighboring cells. Mediates the adherence of lymphocytes to endothelial cells of high endothelial venules in peripheral lymph nodes. Promotes initial tethering and rolling of leukocytes in endothelia. This chain is L-selectin (SELL), found in Homo sapiens (Human).